Consider the following 613-residue polypeptide: Myosin light chain kinase 2, skeletal/cardiac muscle (613 aa).

Residues 1-20 (MTTENGAVELGSQSLSTEQT) are compositionally biased toward polar residues. The disordered stretch occupies residues 1–168 (MTTENGAVEL…RGSPAFLHSP (168 aa)). Basic and acidic residues predominate over residues 32–55 (SEKEPSAPATEKDLSPPNAKKDPG). Over residues 56-66 (APDPKNNPDPP) the composition is skewed to pro residues. Positions 67-83 (SLKKDPAKAPGPEKKGD) are enriched in basic and acidic residues. The span at 95–105 (SGEGDGGGGPA) shows a compositional bias: gly residues. Positions 106 to 122 (EGSEGPPAALPLPTATA) are enriched in low complexity. Positions 145–158 (KAGKKAAECREAGR) are enriched in basic and acidic residues. Phosphoserine is present on residues Ser-161, Ser-167, and Ser-169. The interval 219 to 240 (EKKKEEAEKASGQAGQAKVQGD) is disordered. Residues 302–557 (MNSKEALGGG…AEQCLAHPWL (256 aa)) enclose the Protein kinase domain. ATP contacts are provided by residues 308 to 316 (LGGGKFGAV) and Lys-331. Residue Asp-423 is the Proton acceptor of the active site. Thr-462 bears the Phosphothreonine mark. Residues 591–603 (IAVSAANRFKKIS) form a calmodulin-binding region.

This sequence belongs to the protein kinase superfamily. CAMK Ser/Thr protein kinase family. May interact with centrin.

Its subcellular location is the cytoplasm. It catalyses the reaction L-seryl-[myosin light chain] + ATP = O-phospho-L-seryl-[myosin light chain] + ADP + H(+). It carries out the reaction L-threonyl-[myosin light chain] + ATP = O-phospho-L-threonyl-[myosin light chain] + ADP + H(+). Functionally, implicated in the level of global muscle contraction and cardiac function. Phosphorylates a specific serine in the N-terminus of a myosin light chain. The polypeptide is Myosin light chain kinase 2, skeletal/cardiac muscle (Mylk2) (Mus musculus (Mouse)).